Here is a 76-residue protein sequence, read N- to C-terminus: Brevinin-2ISb (76 aa).

An N-terminal signal peptide occupies residues 1-22; that stretch reads MFTMKKSLLVLFFLGTISLSLC. Positions 23 to 41 are cleaved as a propeptide — removed in mature form; sequence QEERNADEEDGGEATEEEV. Cysteines 70 and 76 form a disulfide.

As to expression, expressed by the skin glands.

The protein resides in the secreted. Its function is as follows. Has antimicrobial activity against Gram-negative bacterium E.coli ATCC 8739 (MIC=12.5 ug), against Gram positive bacteria S.aureus ATCC 6538 (MIC=6.3 ug) and B.subtilis ATCC 6633 (MIC=25 ug). Has no activity against methicillin-resistant S.aureus ATCC 43300 (MIC= ug) and fungus C.albicans ATCC 90028. This chain is Brevinin-2ISb, found in Odorrana ishikawae (Ishikawa's frog).